We begin with the raw amino-acid sequence, 745 residues long: Heterogeneous nuclear ribonucleoprotein U-like protein 2 (745 aa).

The region spanning V3–L37 is the SAP domain. Disordered stretches follow at residues D44–E239 and E625–R664. Residues G73–P97 show a composition bias toward acidic residues. Positions G142–D161 are enriched in basic and acidic residues. At S159 the chain carries Phosphoserine. T163 carries the post-translational modification Phosphothreonine. Phosphoserine occurs at positions 166, 183, 186, 224, and 226. Residues S183–H221 are compositionally biased toward basic and acidic residues. The B30.2/SPRY domain maps to S224–E417. The span at P230–E239 shows a compositional bias: acidic residues. Residues E625–R637 show a composition bias toward basic and acidic residues. Residues T638–R652 are compositionally biased toward basic residues. Residues R654, R682, R736, and R745 each carry the omega-N-methylarginine modification.

In terms of assembly, binds to MLF1 and retains it in the nucleus.

The protein localises to the nucleus. This Mus musculus (Mouse) protein is Heterogeneous nuclear ribonucleoprotein U-like protein 2 (Hnrnpul2).